The sequence spans 770 residues: Protein PAT1 homolog 1 (770 aa).

Positions methionine 1–aspartate 26 are disordered. Positions methionine 1–glutamate 84 are region A; interaction with DDX6/RCK. An involved in nuclear foci localization region spans residues methionine 1–arginine 397. Acidic residues predominate over residues leucine 7–aspartate 26. The segment at asparagine 85–histidine 388 is region N; interaction with decapping machinery. The short motif at leucine 86 to isoleucine 95 is the Nuclear export signal element. Serine 177 carries the phosphoserine modification. The residue at position 178 (threonine 178) is a Phosphothreonine. 2 positions are modified to phosphoserine: serine 179 and serine 184. Phosphothreonine is present on threonine 194. Residues arginine 217, arginine 223, and arginine 263 each carry the asymmetric dimethylarginine modification. The involved in RNA-binding stretch occupies residues arginine 223–arginine 397. At serine 278 the chain carries Phosphoserine. Residue arginine 284 is modified to Asymmetric dimethylarginine. A compositionally biased stretch (low complexity) spans glycine 314–proline 323. Disordered stretches follow at residues glycine 314–arginine 344 and glutamine 360–aspartate 399. Pro residues predominate over residues serine 324–glycine 337. The span at glutamine 367 to asparagine 380 shows a compositional bias: low complexity. Arginine 385 bears the Omega-N-methylarginine mark. The segment covering arginine 385–aspartate 399 has biased composition (basic and acidic residues). The tract at residues arginine 389–glutamate 448 is region H. An involved in nuclear speckle localization region spans residues lysine 398–arginine 770. Positions isoleucine 449 to arginine 770 are region C.

Belongs to the PAT1 family. In terms of assembly, interacts (via region A) with DDX6/RCK. Interacts (via region H and region C) with LSM1 and LSM4. Interacts (via region N) with DCP1A, DCP2, EDC3, EDC4 and XRN1. Interacts with the CCR4-NOT complex. Interacts with the Lsm-containing SMN-Sm protein complex. Interacts with EIF4ENIF1/4E-T. Ubiquitous.

It is found in the cytoplasm. It localises to the P-body. The protein resides in the nucleus. The protein localises to the PML body. Its subcellular location is the nucleus speckle. Functionally, RNA-binding protein involved in deadenylation-dependent decapping of mRNAs, leading to the degradation of mRNAs. Acts as a scaffold protein that connects deadenylation and decapping machinery. Required for cytoplasmic mRNA processing body (P-body) assembly. In terms of biological role, (Microbial infection) In case of infection, required for translation and replication of hepatitis C virus (HCV). This is Protein PAT1 homolog 1 (PATL1) from Homo sapiens (Human).